A 344-amino-acid polypeptide reads, in one-letter code: MRVIRPVEHADIAALMRLAGKTGGGLTSLPANEATLAARIERARKTWSDDLPKSEQGYVFVLEDSETGEVGGICAIEVAVGLNDPWYNYRVGTLVHASKELNVYNALPTLFLSNDHTGSSELCTLFLDPEWRKEGNGYVLSKSRFMFMAAFRDKFNEKVVAEMRGVIDEHGYSPFWQSLGKRFFSMDFSRADFLCGTGQKAFIAELMPKHPIYTHFLSEEAQAVIGEVHPQTAPARAVLEKEGFRYRHYIDIFDGGPTLECDIDRVRAIRKSRLVEIAEGQPAPGDYPACLVANENYHHFRAALVRADPQTSRLVFTAAQLDALKCRAGDHVRLVRLCAEEKTV.

L125 contacts succinyl-CoA. Residue H229 is the Proton donor of the active site.

It belongs to the arginine N-succinyltransferase family.

The enzyme catalyses succinyl-CoA + L-arginine = N(2)-succinyl-L-arginine + CoA + H(+). Its pathway is amino-acid degradation; L-arginine degradation via AST pathway; L-glutamate and succinate from L-arginine: step 1/5. Catalyzes the transfer of succinyl-CoA to arginine to produce N(2)-succinylarginine. This chain is Arginine N-succinyltransferase, found in Salmonella arizonae (strain ATCC BAA-731 / CDC346-86 / RSK2980).